The following is a 369-amino-acid chain: Forkhead box protein I2-A (369 aa).

A DNA-binding region (fork-head) is located at residues 124–218; sequence RPPYSYSSLI…DNGNFRRKRK (95 aa). Residues 215–252 are disordered; that stretch reads RKRKRKSESVGAGFDEDSNEDKKPLALKSLGSDSPQGA.

As to expression, localized to the animal hemisphere of early cleavage stage embryos. Zygotic expression is restricted to the dorsal part of the epibranchial placodes of the head within a region located near the tip of the first, second and third visceral pouch.

Its subcellular location is the nucleus. Its function is as follows. Possible transcriptional activator. The polypeptide is Forkhead box protein I2-A (foxi2-a) (Xenopus laevis (African clawed frog)).